Reading from the N-terminus, the 141-residue chain is Nucleoside diphosphate kinase (141 aa).

Residues lysine 11, phenylalanine 59, arginine 87, threonine 93, arginine 104, and asparagine 114 each coordinate ATP. Histidine 117 (pros-phosphohistidine intermediate) is an active-site residue.

The protein belongs to the NDK family. Homotetramer. Mg(2+) serves as cofactor.

The protein resides in the cytoplasm. The catalysed reaction is a 2'-deoxyribonucleoside 5'-diphosphate + ATP = a 2'-deoxyribonucleoside 5'-triphosphate + ADP. It catalyses the reaction a ribonucleoside 5'-diphosphate + ATP = a ribonucleoside 5'-triphosphate + ADP. Its function is as follows. Major role in the synthesis of nucleoside triphosphates other than ATP. The ATP gamma phosphate is transferred to the NDP beta phosphate via a ping-pong mechanism, using a phosphorylated active-site intermediate. The sequence is that of Nucleoside diphosphate kinase from Azoarcus sp. (strain BH72).